We begin with the raw amino-acid sequence, 511 residues long: Sodium/proline symporter (511 aa).

13 helical membrane passes run 16 to 36 (WQTYIMIAVYFLILMLLAFTY), 53 to 73 (IGPYITALSAGASDMSGWMIM), 84 to 104 (LSAMWITIGLTLGAYINYFVV), 138 to 158 (IISGLIIVVFFTLYTHSGFVS), 173 to 193 (FGLILVAFIVIFYTFFGGYLA), 199 to 219 (FFQGVIMLIAMVMVPIVAMMN), 239 to 259 (LFKGLSFIGIISLFSWGLGYF), 285 to 305 (ISWMAVGLLGAVAVGLTGIAF), 326 to 346 (VLFHPLVGGFLLAAILAAIMS), 380 to 400 (FVMIGRLSVLVVAIVAIAIAW), 409 to 429 (LVGNAWAGFGASFSPLVLFAL), 437 to 457 (AGAVSGMVSGALVVIVWIAWI), and 466 to 486 (IFGLYEIIPGFIVSVIVTYVV).

The protein belongs to the sodium:solute symporter (SSF) (TC 2.A.21) family.

It localises to the cell membrane. It carries out the reaction L-proline(in) + Na(+)(in) = L-proline(out) + Na(+)(out). Its function is as follows. Catalyzes the sodium-dependent uptake of extracellular L-proline. Since most S.aureus strains are L-proline auxotrophs, this transporter may aid the bacterial persistence during an infection of tissues with low proline concentrations. This Staphylococcus aureus protein is Sodium/proline symporter.